The primary structure comprises 317 residues: Transaldolase (317 aa).

The Schiff-base intermediate with substrate role is filled by lysine 132.

This sequence belongs to the transaldolase family. Type 1 subfamily. In terms of assembly, homodimer.

It localises to the cytoplasm. The enzyme catalyses D-sedoheptulose 7-phosphate + D-glyceraldehyde 3-phosphate = D-erythrose 4-phosphate + beta-D-fructose 6-phosphate. It functions in the pathway carbohydrate degradation; pentose phosphate pathway; D-glyceraldehyde 3-phosphate and beta-D-fructose 6-phosphate from D-ribose 5-phosphate and D-xylulose 5-phosphate (non-oxidative stage): step 2/3. Its function is as follows. Transaldolase is important for the balance of metabolites in the pentose-phosphate pathway. The sequence is that of Transaldolase from Actinobacillus succinogenes (strain ATCC 55618 / DSM 22257 / CCUG 43843 / 130Z).